A 1155-amino-acid polypeptide reads, in one-letter code: MAKKNTKKDNKNQNLRCPIVCVLGHVDHGKCLMPHEKVLTEYGEIKIEDLFKIGKEIVEKDELKEIRKLNIKVHTLNENGEIKIINAPYVWKLKHKGKMIKVKLKNWHSITTTPEHPFLTNNGWIKAENIKKGMYVAIPRKIYGNEDFEKFIEFINSKILTNELIVKVNEKDLKNVELPSTKIYKKQKNVFRSEDIIEHNLNIEKISFSPRIHRCGKPQHYIKLPKSLNEWKAIFYFAGVMFGDGCVDRIANNDEEVFNKLKSLNNLGIEVERIKRKSSYEIIFKNGKNALINLLKILFDYPSEKKSHNIKIPQILYIAPKELVAEFIKGYFDADGYVNLRQNRIEVISASKEFIEGLSILLLRFEITSKIYEIKKSYKETKKKYYQLNIVGKRNLKNFKNIGFSIKYKEENLNKIIEKSRKSEKYPINKDMKRLRILFGMTRNEVNVSYYAKYENGKEIPSYEIVKKFLNSLKPKNLDKKIKVLEGKERDVNYLKAFESDGLIENGRLTKLGREALNIWKNHEFGKENIDYMKSLIENIAFVEVEDVEIIDYDGYVYDLTTETHNFIANGIVVHNTTLLDKIRKTRVAKREAGGITQHIGASEIPIDVIKRLCGDLLKMLKADLKIPGLLVIDTPGHEAFTSLRKRGGALADIAILVVDINEGFKPQTVEAVNILRQCKTPFVVAANKIDLIPGWNSKEGPFILNFNEKNQHPNALTEFEIRLYENIIKPLNELGFDADLYSRVQDVTKTVCIIPVSAVTGEGIPDLLMMVAGLAQKFLEDRLKLNVEGYAKGTILEVKEEKGLGTTIDAIIYDGIAKRGDYLVVGLPDDVLVTRVKALLKPKPLDEMRDPRDKFKPVNEVTAAAGVKIAAPELDKVIAGCPIRIVPKDKIEEAKEEVMKEVEEAKIEVDDEGILIKADTLGSLEALANELRKAGVKIKKAEVGDVTKKDVIEVASYKQSNPLHGAIVAFNVKILPEAQKEIEKYDIKVFLDNIIYKLVEDFTEWIKKEEERIKYGEFEKLIKPAIIRILPDCIFRQKDPAICGVEVLCGTLRVGAPLMREDGMQLGYVREIKDRGENVKEAKAGKAVSIAIDGRVVLKRHVDEGDYMYVAVPESHVRELYHKYMDRLRNDEKEALLRYMELMQKLTNNIFWGR.

One can recognise a DOD-type homing endonuclease domain in the interval 237–367; the sequence is FAGVMFGDGC…LSILLLRFEI (131 aa). The tr-type G domain maps to 561–781; sequence TTETHNFIAN…VAGLAQKFLE (221 aa). GTP contacts are provided by residues 634-638 and 688-691; these read DTPGH and NKID.

It belongs to the TRAFAC class translation factor GTPase superfamily. Classic translation factor GTPase family. IF-2 subfamily. Post-translationally, this protein undergoes a protein self splicing that involves a post-translational excision of the intervening region (intein) followed by peptide ligation.

Its function is as follows. Function in general translation initiation by promoting the binding of the formylmethionine-tRNA to ribosomes. Seems to function along with eIF-2. The polypeptide is Probable translation initiation factor IF-2 (infB) (Methanocaldococcus jannaschii (strain ATCC 43067 / DSM 2661 / JAL-1 / JCM 10045 / NBRC 100440) (Methanococcus jannaschii)).